Consider the following 169-residue polypeptide: Crossover junction endodeoxyribonuclease RuvC (169 aa).

Catalysis depends on residues aspartate 11, glutamate 71, and aspartate 143. Residues aspartate 11, glutamate 71, and aspartate 143 each coordinate Mg(2+).

It belongs to the RuvC family. In terms of assembly, homodimer which binds Holliday junction (HJ) DNA. The HJ becomes 2-fold symmetrical on binding to RuvC with unstacked arms; it has a different conformation from HJ DNA in complex with RuvA. In the full resolvosome a probable DNA-RuvA(4)-RuvB(12)-RuvC(2) complex forms which resolves the HJ. Requires Mg(2+) as cofactor.

The protein localises to the cytoplasm. The catalysed reaction is Endonucleolytic cleavage at a junction such as a reciprocal single-stranded crossover between two homologous DNA duplexes (Holliday junction).. Its function is as follows. The RuvA-RuvB-RuvC complex processes Holliday junction (HJ) DNA during genetic recombination and DNA repair. Endonuclease that resolves HJ intermediates. Cleaves cruciform DNA by making single-stranded nicks across the HJ at symmetrical positions within the homologous arms, yielding a 5'-phosphate and a 3'-hydroxyl group; requires a central core of homology in the junction. The consensus cleavage sequence is 5'-(A/T)TT(C/G)-3'. Cleavage occurs on the 3'-side of the TT dinucleotide at the point of strand exchange. HJ branch migration catalyzed by RuvA-RuvB allows RuvC to scan DNA until it finds its consensus sequence, where it cleaves and resolves the cruciform DNA. The protein is Crossover junction endodeoxyribonuclease RuvC of Rhizobium etli (strain CIAT 652).